A 142-amino-acid chain; its full sequence is Large ribosomal subunit protein bL17 (142 aa).

Belongs to the bacterial ribosomal protein bL17 family. In terms of assembly, part of the 50S ribosomal subunit. Contacts protein L32.

The protein is Large ribosomal subunit protein bL17 of Brucella canis (strain ATCC 23365 / NCTC 10854 / RM-666).